The chain runs to 157 residues: S-ribosylhomocysteine lyase (157 aa).

Positions 54, 58, and 124 each coordinate Fe cation.

This sequence belongs to the LuxS family. Homodimer. Requires Fe cation as cofactor.

The catalysed reaction is S-(5-deoxy-D-ribos-5-yl)-L-homocysteine = (S)-4,5-dihydroxypentane-2,3-dione + L-homocysteine. In terms of biological role, involved in the synthesis of autoinducer 2 (AI-2) which is secreted by bacteria and is used to communicate both the cell density and the metabolic potential of the environment. The regulation of gene expression in response to changes in cell density is called quorum sensing. Catalyzes the transformation of S-ribosylhomocysteine (RHC) to homocysteine (HC) and 4,5-dihydroxy-2,3-pentadione (DPD). This chain is S-ribosylhomocysteine lyase, found in Oenococcus oeni (strain ATCC BAA-331 / PSU-1).